Here is a 221-residue protein sequence, read N- to C-terminus: Translation initiation factor 6 (221 aa).

The protein belongs to the eIF-6 family.

In terms of biological role, binds to the 50S ribosomal subunit and prevents its association with the 30S ribosomal subunit to form the 70S initiation complex. The polypeptide is Translation initiation factor 6 (Methanocella arvoryzae (strain DSM 22066 / NBRC 105507 / MRE50)).